The primary structure comprises 367 residues: Germination protease (367 aa).

Residues 1–15 (MKEPLDLSKYSVRTD) constitute a propeptide that is removed on maturation.

Belongs to the peptidase A25 family. As to quaternary structure, homotetramer. Autoproteolytically processed. The inactive tetrameric zymogen termed p46 autoprocesses to a smaller form termed p41, which is active only during spore germination.

It catalyses the reaction Endopeptidase action with P4 Glu or Asp, P1 preferably Glu &gt; Asp, P1' hydrophobic and P2' Ala.. Functionally, initiates the rapid degradation of small, acid-soluble proteins during spore germination. This is Germination protease from Bacillus cereus (strain AH187).